The sequence spans 381 residues: tRNA-cytidine(32) 2-sulfurtransferase (381 aa).

Residues 101–106 (SGGKDS) carry the PP-loop motif motif. Positions 176, 179, and 267 each coordinate [4Fe-4S] cluster.

It belongs to the TtcA family. Homodimer. It depends on Mg(2+) as a cofactor. [4Fe-4S] cluster is required as a cofactor.

It is found in the cytoplasm. It catalyses the reaction cytidine(32) in tRNA + S-sulfanyl-L-cysteinyl-[cysteine desulfurase] + AH2 + ATP = 2-thiocytidine(32) in tRNA + L-cysteinyl-[cysteine desulfurase] + A + AMP + diphosphate + H(+). It functions in the pathway tRNA modification. Catalyzes the ATP-dependent 2-thiolation of cytidine in position 32 of tRNA, to form 2-thiocytidine (s(2)C32). The sulfur atoms are provided by the cysteine/cysteine desulfurase (IscS) system. This is tRNA-cytidine(32) 2-sulfurtransferase from Psychrobacter arcticus (strain DSM 17307 / VKM B-2377 / 273-4).